The primary structure comprises 320 residues: Cytochrome f (320 aa).

An N-terminal signal peptide occupies residues 1–36 (MKHTNSKQKLKDIINFCQAIFTLCIICLYQANISNS). Positions 37, 57, 60, and 61 each coordinate heme. A helical membrane pass occupies residues 286-305 (LISFIFFSISVLISQLFFVL).

The protein belongs to the cytochrome f family. The 4 large subunits of the cytochrome b6-f complex are cytochrome b6, subunit IV (17 kDa polypeptide, petD), cytochrome f and the Rieske protein, while the 4 small subunits are PetG, PetL, PetM and PetN. The complex functions as a dimer. Requires heme as cofactor.

It is found in the plastid. Its subcellular location is the chloroplast thylakoid membrane. Its function is as follows. Component of the cytochrome b6-f complex, which mediates electron transfer between photosystem II (PSII) and photosystem I (PSI), cyclic electron flow around PSI, and state transitions. This chain is Cytochrome f (petA), found in Cyanidium caldarium (Red alga).